The chain runs to 918 residues: GPI ethanolamine phosphate transferase 3 (918 aa).

A helical transmembrane segment spans residues isoleucine 16–phenylalanine 36. 5 N-linked (GlcNAc...) asparagine glycosylation sites follow: asparagine 54, asparagine 71, asparagine 101, asparagine 197, and asparagine 399. The next 15 membrane-spanning stretches (helical) occupy residues leucine 429–leucine 449, methionine 459–leucine 479, serine 486–phenylalanine 506, phenylalanine 523–tryptophan 543, leucine 547–cysteine 563, methionine 567–isoleucine 587, threonine 616–leucine 636, leucine 651–phenylalanine 671, serine 687–leucine 707, isoleucine 715–leucine 735, proline 738–lysine 758, proline 762–phenylalanine 782, isoleucine 813–phenylalanine 833, phenylalanine 853–phenylalanine 873, and phenylalanine 887–glycine 907.

It belongs to the PIGG/PIGN/PIGO family. PIGO subfamily. Glycosylated.

It is found in the endoplasmic reticulum membrane. The protein operates within glycolipid biosynthesis; glycosylphosphatidylinositol-anchor biosynthesis. Involved in glycosylphosphatidylinositol-anchor biosynthesis. Transfers ethanolamine phosphate to the GPI third mannose which links the GPI-anchor to the C-terminus of the proteins by an amide bond. Involved in cell wall biosynthesis. The sequence is that of GPI ethanolamine phosphate transferase 3 (gpi13) from Schizosaccharomyces pombe (strain 972 / ATCC 24843) (Fission yeast).